Reading from the N-terminus, the 295-residue chain is Small ribosomal subunit protein uS2 (295 aa).

A disordered region spans residues 273–295 (WAASSAPAAETLADPAADPSVKW). Over residues 274–295 (AASSAPAAETLADPAADPSVKW) the composition is skewed to low complexity.

This sequence belongs to the universal ribosomal protein uS2 family. In terms of assembly, component of the small ribosomal subunit. Mature ribosomes consist of a small (40S) and a large (60S) subunit. The 40S subunit contains about 33 different proteins and 1 molecule of RNA (18S). The 60S subunit contains about 49 different proteins and 3 molecules of RNA (25S, 5.8S and 5S). Interacts with RPS21.

Its subcellular location is the cytoplasm. Functionally, required for the assembly and/or stability of the 40S ribosomal subunit. Required for the processing of the 20S rRNA-precursor to mature 18S rRNA in a late step of the maturation of 40S ribosomal subunits. In Paracoccidioides lutzii (strain ATCC MYA-826 / Pb01) (Paracoccidioides brasiliensis), this protein is Small ribosomal subunit protein uS2.